Here is a 799-residue protein sequence, read N- to C-terminus: Lon protease (799 aa).

The region spanning 7–200 (LPVLPLRDIV…KVFALMEGEI (194 aa)) is the Lon N-terminal domain. 352–359 (GPPGVGKT) is a binding site for ATP. The Lon proteolytic domain maps to 587 to 768 (VDQVGIVTGL…DEVLKHALTG (182 aa)). Active-site residues include Ser-674 and Lys-717. The interval 772–799 (PVEWNEAEEPITTSAKKDDGDSDAMLTH) is disordered.

Belongs to the peptidase S16 family. As to quaternary structure, homohexamer. Organized in a ring with a central cavity.

Its subcellular location is the cytoplasm. It catalyses the reaction Hydrolysis of proteins in presence of ATP.. Functionally, ATP-dependent serine protease that mediates the selective degradation of mutant and abnormal proteins as well as certain short-lived regulatory proteins. Required for cellular homeostasis and for survival from DNA damage and developmental changes induced by stress. Degrades polypeptides processively to yield small peptide fragments that are 5 to 10 amino acids long. Binds to DNA in a double-stranded, site-specific manner. CcrM is an important target of the Lon protease pathway in C.crescentus. In Caulobacter vibrioides (strain ATCC 19089 / CIP 103742 / CB 15) (Caulobacter crescentus), this protein is Lon protease.